The chain runs to 141 residues: Putative pre-16S rRNA nuclease (141 aa).

This sequence belongs to the YqgF nuclease family.

It localises to the cytoplasm. Functionally, could be a nuclease involved in processing of the 5'-end of pre-16S rRNA. The sequence is that of Putative pre-16S rRNA nuclease from Natranaerobius thermophilus (strain ATCC BAA-1301 / DSM 18059 / JW/NM-WN-LF).